Reading from the N-terminus, the 194-residue chain is Cytochrome bo(3) ubiquinol oxidase subunit 3 (194 aa).

Residues 1–18 are Cytoplasmic-facing; it reads MKKKYKIDTNIFSKELLG. The helical transmembrane segment at 19–41 threads the bilayer; the sequence is FWLYLMSDCIIFCTLFSVYFILV. Residues 42 to 55 lie on the Extracellular side of the membrane; the sequence is DNVAQGPSGHNIFQ. Residues 56–78 form a helical membrane-spanning segment; it reads NNLIIIETFLLLFSSFSCNLVLF. The Cytoplasmic segment spans residues 79-84; that stretch reads EMKNKN. The chain crosses the membrane as a helical span at residues 85 to 107; it reads LYMVFLWLGITFLLGLLFVFLEL. At 108–126 the chain is on the extracellular side; sequence FEFFHLINLGFGPTRSGFL. Residues 127-149 form a helical membrane-spanning segment; that stretch reads SSFFVLIATHGIHVISGLIWIIV. The Cytoplasmic portion of the chain corresponds to 150 to 169; sequence MIKYVYTFNITNLIYYRMLC. Residues 170-192 form a helical membrane-spanning segment; sequence LNLFWHFLDIVWVFIFSFVYLFG. Topologically, residues 193 to 194 are extracellular; that stretch reads MV.

This sequence belongs to the cytochrome c oxidase subunit 3 family. Heterooctamer of two A chains, two B chains, two C chains and two D chains.

The protein localises to the cell membrane. Cytochrome bo(3) ubiquinol terminal oxidase is the component of the aerobic respiratory chain of E.coli that predominates when cells are grown at high aeration. Has proton pump activity across the membrane in addition to electron transfer, pumping 2 protons/electron. The polypeptide is Cytochrome bo(3) ubiquinol oxidase subunit 3 (cyoC) (Buchnera aphidicola subsp. Baizongia pistaciae (strain Bp)).